The primary structure comprises 565 residues: Proline--tRNA ligase (565 aa).

It belongs to the class-II aminoacyl-tRNA synthetase family. ProS type 1 subfamily. As to quaternary structure, homodimer.

It localises to the cytoplasm. It catalyses the reaction tRNA(Pro) + L-proline + ATP = L-prolyl-tRNA(Pro) + AMP + diphosphate. In terms of biological role, catalyzes the attachment of proline to tRNA(Pro) in a two-step reaction: proline is first activated by ATP to form Pro-AMP and then transferred to the acceptor end of tRNA(Pro). As ProRS can inadvertently accommodate and process non-cognate amino acids such as alanine and cysteine, to avoid such errors it has two additional distinct editing activities against alanine. One activity is designated as 'pretransfer' editing and involves the tRNA(Pro)-independent hydrolysis of activated Ala-AMP. The other activity is designated 'posttransfer' editing and involves deacylation of mischarged Ala-tRNA(Pro). The misacylated Cys-tRNA(Pro) is not edited by ProRS. The chain is Proline--tRNA ligase from Francisella philomiragia subsp. philomiragia (strain ATCC 25017 / CCUG 19701 / FSC 153 / O#319-036).